Reading from the N-terminus, the 20-residue chain is Implantin (20 aa).

Belongs to the EF-1-beta/EF-1-delta family. In terms of processing, phosphorylated. In terms of tissue distribution, uterus and embryo.

It is found in the cytoplasm. The protein resides in the nucleus. In terms of biological role, binds DNA. This Mus musculus (Mouse) protein is Implantin.